The following is a 419-amino-acid chain: Pregnancy-specific beta-1-glycoprotein 1 (419 aa).

An N-terminal signal peptide occupies residues Met-1–Ala-34. The Ig-like V-type domain occupies Gln-35–Leu-144. N-linked (GlcNAc...) asparagine glycans are attached at residues Asn-61, Asn-104, Asn-111, Asn-199, Asn-259, Asn-268, and Asn-303. Ig-like C2-type domains follow at residues Pro-149–Asn-234, Pro-240–Asn-327, and Pro-335–Thr-410. A disulfide bridge connects residues Cys-169 and Cys-217. Disulfide bonds link Cys-262/Cys-310 and Cys-354/Cys-394.

The protein belongs to the immunoglobulin superfamily. CEA family.

It localises to the secreted. The sequence is that of Pregnancy-specific beta-1-glycoprotein 1 (PSG1) from Homo sapiens (Human).